Here is a 470-residue protein sequence, read N- to C-terminus: Phosphoribosylamine--glycine ligase (470 aa).

The 240-residue stretch at 115–354 (KDFLKRIGVP…MAEISMAVVE (240 aa)) folds into the ATP-grasp domain. 142 to 203 (REKFNNGIVV…EERLRGIEVA (62 aa)) lines the ATP pocket. Glutamate 324 and asparagine 326 together coordinate Mg(2+).

Belongs to the GARS family. The cofactor is Mg(2+). Mn(2+) is required as a cofactor.

It catalyses the reaction 5-phospho-beta-D-ribosylamine + glycine + ATP = N(1)-(5-phospho-beta-D-ribosyl)glycinamide + ADP + phosphate + H(+). The protein operates within purine metabolism; IMP biosynthesis via de novo pathway; N(1)-(5-phospho-D-ribosyl)glycinamide from 5-phospho-alpha-D-ribose 1-diphosphate: step 2/2. The sequence is that of Phosphoribosylamine--glycine ligase (purD) from Archaeoglobus fulgidus (strain ATCC 49558 / DSM 4304 / JCM 9628 / NBRC 100126 / VC-16).